A 322-amino-acid chain; its full sequence is Quinolinate synthase (322 aa).

His37 and Ser54 together coordinate iminosuccinate. Cys99 serves as a coordination point for [4Fe-4S] cluster. Iminosuccinate-binding positions include 125–127 (YIN) and Ser142. Position 185 (Cys185) interacts with [4Fe-4S] cluster. Iminosuccinate is bound by residues 211–213 (HPE) and Thr228. A [4Fe-4S] cluster-binding site is contributed by Cys278.

Belongs to the quinolinate synthase family. Type 2 subfamily. Requires [4Fe-4S] cluster as cofactor.

Its subcellular location is the cytoplasm. The enzyme catalyses iminosuccinate + dihydroxyacetone phosphate = quinolinate + phosphate + 2 H2O + H(+). It participates in cofactor biosynthesis; NAD(+) biosynthesis; quinolinate from iminoaspartate: step 1/1. Its function is as follows. Catalyzes the condensation of iminoaspartate with dihydroxyacetone phosphate to form quinolinate. In Chlorobaculum parvum (strain DSM 263 / NCIMB 8327) (Chlorobium vibrioforme subsp. thiosulfatophilum), this protein is Quinolinate synthase.